The following is a 339-amino-acid chain: Ribosomal RNA small subunit methyltransferase H (339 aa).

Residues G56 to H58, D76, F102, D123, and Q130 contribute to the S-adenosyl-L-methionine site. Disordered regions lie at residues R274 to V309 and L320 to S339. Over residues R325 to S339 the composition is skewed to polar residues.

The protein belongs to the methyltransferase superfamily. RsmH family.

The protein localises to the cytoplasm. It carries out the reaction cytidine(1402) in 16S rRNA + S-adenosyl-L-methionine = N(4)-methylcytidine(1402) in 16S rRNA + S-adenosyl-L-homocysteine + H(+). Its function is as follows. Specifically methylates the N4 position of cytidine in position 1402 (C1402) of 16S rRNA. The polypeptide is Ribosomal RNA small subunit methyltransferase H (Psychrobacter sp. (strain PRwf-1)).